The primary structure comprises 72 residues: MESAARRSGGGVLEGFYRLVMRRTPVYVTFVIAGALLGERAVDYGVKTLWEKNNVGKRYEDISVLGQRPVDE.

The Mitochondrial matrix portion of the chain corresponds to 1 to 27; sequence MESAARRSGGGVLEGFYRLVMRRTPVY. The helical transmembrane segment at 28-53 threads the bilayer; the sequence is VTFVIAGALLGERAVDYGVKTLWEKN. At 54–72 the chain is on the mitochondrial intermembrane side; it reads NVGKRYEDISVLGQRPVDE.

Belongs to the UQCR10/QCR9 family. In terms of assembly, component of the ubiquinol-cytochrome c oxidoreductase (cytochrome b-c1 complex, complex III, CIII), a multisubunit enzyme composed of 3 respiratory subunits cytochrome b, cytochrome c1 and Rieske protein, 2 core protein subunits, and additional low-molecular weight protein subunits. The complex exists as an obligatory dimer and forms supercomplexes (SCs) in the inner mitochondrial membrane with cytochrome c oxidase (complex IV, CIV).

The protein localises to the mitochondrion inner membrane. In terms of biological role, component of the ubiquinol-cytochrome c oxidoreductase, a multisubunit transmembrane complex that is part of the mitochondrial electron transport chain which drives oxidative phosphorylation. The respiratory chain contains 3 multisubunit complexes succinate dehydrogenase (complex II, CII), ubiquinol-cytochrome c oxidoreductase (cytochrome b-c1 complex, complex III, CIII) and cytochrome c oxidase (complex IV, CIV), that cooperate to transfer electrons derived from NADH and succinate to molecular oxygen, creating an electrochemical gradient over the inner membrane that drives transmembrane transport and the ATP synthase. The cytochrome b-c1 complex catalyzes electron transfer from ubiquinol to cytochrome c, linking this redox reaction to translocation of protons across the mitochondrial inner membrane, with protons being carried across the membrane as hydrogens on the quinol. In the process called Q cycle, 2 protons are consumed from the matrix, 4 protons are released into the intermembrane space and 2 electrons are passed to cytochrome c. The polypeptide is Cytochrome b-c1 complex subunit 9 (Solanum tuberosum (Potato)).